A 900-amino-acid polypeptide reads, in one-letter code: UPF0182 protein Ppro_3567 (900 aa).

7 helical membrane passes run 15–35, 60–80, 112–132, 174–194, 210–230, 257–277, and 282–302; these read FFPL…LLNL, GAGL…LHVA, VSML…AMKW, FIIL…GGIL, LAVL…LDSF, VLTF…WKGV, and LLAP…YPGV.

It belongs to the UPF0182 family.

It is found in the cell membrane. In Pelobacter propionicus (strain DSM 2379 / NBRC 103807 / OttBd1), this protein is UPF0182 protein Ppro_3567.